We begin with the raw amino-acid sequence, 1036 residues long: MYLVAGDRGLAGCGHLLVSLLGLLLLLARSGTRALVCLPCDESKCEEPRNCPGSIVQGVCGCCYTCASQRNESCGGTFGIYGTCDRGLRCVIRPPLNGDSLTEYEAGVCEDENWTDDQLLGFKPCNENLIAGCNIINGKCECNTIRTCSNPFEFPSQDMCLSALKRIEEEKPDCSKARCEVQFSPRCPEDSVLIEGYAPPGECCPLPSRCVCNPAGCLRKVCQPGNLNILVSKASGKPGECCDLYECKPVFGVDCRTVECPPVQQTACPPDSYETQVRLTADGCCTLPTRCECLSGLCGFPVCEVGSTPRIVSRGDGTPGKCCDVFECVNDTKPACVFNNVEYYDGDMFRMDNCRFCRCQGGVAICFTAQCGEINCERYYVPEGECCPVCEDPVYPFNNPAGCYANGLILAHGDRWREDDCTFCQCVNGERHCVATVCGQTCTNPVKVPGECCPVCEEPTIITVDPPACGELSNCTLTGKDCINGFKRDHNGCRTCQCINTEELCSERKQGCTLNCPFGFLTDAQNCEICECRPRPKKCRPIICDKYCPLGLLKNKHGCDICRCKKCPELSCSKICPLGFQQDSHGCLICKCREASASAGPPILSGTCLTVDGHHHKNEESWHDGCRECYCLNGREMCALITCPVPACGNPTIHPGQCCPSCADDFVVQKPELSTPSICHAPGGEYFVEGETWNIDSCTQCTCHSGRVLCETEVCPPLLCQNPSRTQDSCCPQCTDQPFRPSLSRNNSVPNYCKNDEGDIFLAAESWKPDVCTSCICIDSVISCFSESCPSVSCERPVLRKGQCCPYCIEDTIPKKVVCHFSGKAYADEERWDLDSCTHCYCLQGQTLCSTVSCPPLPCVEPINVEGSCCPMCPEMYVPEPTNIPIEKTNHRGEVDLEVPLWPTPSENDIVHLPRDMGHLQVDYRDNRLHPSEDSSLDSIASVVVPIIICLSIIIAFLFINQKKQWIPLLCWYRTPTKPSSLNNQLVSVDCKKGTRVQVDSSQRMLRIAEPDARFSGFYSMQKQNHLQADNFYQTV.

A signal peptide spans 1–34; that stretch reads MYLVAGDRGLAGCGHLLVSLLGLLLLLARSGTRA. One can recognise an IGFBP N-terminal domain in the interval 35-112; that stretch reads LVCLPCDESK…EYEAGVCEDE (78 aa). At 35-939 the chain is on the extracellular side; it reads LVCLPCDESK…HPSEDSSLDS (905 aa). 4 disulfide bridges follow: Cys-37–Cys-60, Cys-40–Cys-62, Cys-45–Cys-63, and Cys-51–Cys-66. A glycan (N-linked (GlcNAc...) asparagine) is linked at Asn-71. 2 cysteine pairs are disulfide-bonded: Cys-74/Cys-90 and Cys-84/Cys-109. Asn-113 carries an N-linked (GlcNAc...) asparagine glycan. Residues 314–316 carry the Cell attachment site motif; that stretch reads RGD. N-linked (GlcNAc...) asparagine glycosylation occurs at Asn-330. 2 VWFC domains span residues 334–391 and 401–457; these read PACV…PVCE and AGCY…PVCE. Antistasin-like domains are found at residues 469–498, 505–532, 539–564, and 567–592; these read CGEL…TCQC, CSER…ICEC, CRPI…ICRC, and CPEL…ICKC. The N-linked (GlcNAc...) asparagine glycan is linked to Asn-474. 2 consecutive VWFC domains span residues 606–663 and 677–735; these read GTCL…PSCA and SICH…PQCT. Asn-746 is a glycosylation site (N-linked (GlcNAc...) asparagine). 2 consecutive VWFC domains span residues 751–809 and 817–874; these read NYCK…PYCI and VVCH…PMCP. Residues 940–960 form a helical membrane-spanning segment; sequence IASVVVPIIICLSIIIAFLFI. Residues 961–1036 lie on the Cytoplasmic side of the membrane; it reads NQKKQWIPLL…LQADNFYQTV (76 aa). At Thr-1035 the chain carries Phosphothreonine.

In terms of assembly, interacts with BMP4 and BMP7. N-glycosylated. Expressed in pancreas, kidney, skeletal muscle, lung, placenta, brain, heart, spleen, liver and small intestine. Expressed in blood vessels (at protein level).

The protein localises to the secreted. The protein resides in the cell membrane. Its function is as follows. May play a role in CNS development by interacting with growth factors implicated in motor neuron differentiation and survival. May play a role in capillary formation and maintenance during angiogenesis. Modulates BMP activity by affecting its processing and delivery to the cell surface. The sequence is that of Cysteine-rich motor neuron 1 protein (CRIM1) from Homo sapiens (Human).